We begin with the raw amino-acid sequence, 230 residues long: MTADDRIKLEPSWKEALRAEFDQPYMSELREFLRQEHAAGKEIYPPGPMIFNALNSTPLDKVKVVILGQDPYHGPGQAHGLCFSVQPGVPAPPSLVNIYKELKRDLNIDIPNHGYLQSWAEQGVLMLNTTMTVERANAASHAGKGWQFFTDRIIEVVSEHQPHLVFLLWGAHAQSKQKLIDATKHLVLTSVHPSPLSAYRGFLGCGHFSRTNKYLEQNGETPIEWRLPPL.

Residue Asp70 is the Proton acceptor of the active site.

It belongs to the uracil-DNA glycosylase (UDG) superfamily. UNG family.

The protein localises to the cytoplasm. The enzyme catalyses Hydrolyzes single-stranded DNA or mismatched double-stranded DNA and polynucleotides, releasing free uracil.. Excises uracil residues from the DNA which can arise as a result of misincorporation of dUMP residues by DNA polymerase or due to deamination of cytosine. In Pseudomonas fluorescens (strain ATCC BAA-477 / NRRL B-23932 / Pf-5), this protein is Uracil-DNA glycosylase.